Consider the following 202-residue polypeptide: Protease (202 aa).

Catalysis depends on residues His-55, Asp-72, and Cys-122.

It belongs to the peptidase C5 family. In terms of assembly, interacts with protease cofactor pVI-C; this interaction is necessary for protease activation.

It localises to the virion. Its subcellular location is the host nucleus. The catalysed reaction is Cleaves proteins of the adenovirus and its host cell at two consensus sites: -Yaa-Xaa-Gly-Gly-|-Xaa- and -Yaa-Xaa-Gly-Xaa-|-Gly- (in which Yaa is Met, Ile or Leu, and Xaa is any amino acid).. Requires DNA and protease cofactor for maximal activation. Inside nascent virions, becomes partially activated by binding to the viral DNA, allowing it to cleave the cofactor that binds to the protease and fully activates it. Actin, like the viral protease cofactor, seems to act as a cofactor in the cleavage of cytokeratin 18 and of actin itself. Functionally, cleaves viral precursor proteins (pTP, pIIIa, pVI, pVII, pVIII, and pX) inside newly assembled particles giving rise to mature virions. Protease complexed to its cofactor slides along the viral DNA to specifically locate and cleave the viral precursors. Mature virions have a weakened organization compared to the unmature virions, thereby facilitating subsequent uncoating. Without maturation, the particle lacks infectivity and is unable to uncoat. Late in adenovirus infection, in the cytoplasm, may participate in the cytoskeleton destruction. Cleaves host cell cytoskeletal keratins K7 and K18. The polypeptide is Protease (Bovine adenovirus 7 (BAdV-7)).